The sequence spans 505 residues: Forkhead box protein O4 (505 aa).

The span at 1–10 (MDPGNENSAT) shows a compositional bias: polar residues. Disordered stretches follow at residues 1–100 (MDPG…RRNA) and 176–246 (SWWM…CSRN). A Phosphothreonine; by PKB/AKT1 modification is found at threonine 32. Positions 54 to 64 (LGEKVHTEGRS) are enriched in basic and acidic residues. Positions 100–188 (AWGNQSYAEL…MLNPEGGKSG (89 aa)) form a DNA-binding region, fork-head. Serine 197 carries the phosphoserine; by PKB/AKT1 modification. Residues 205-216 (LRGRSKAPKKKP) show a composition bias toward basic residues. The residue at position 262 (serine 262) is a Phosphoserine; by PKB/AKT1.

As to quaternary structure, interacts with CREBBP/CBP, CTNNB1, MYOCD, SIRT1, SRF and YWHAZ. Acetylated by CREBBP/CBP and deacetylated by SIRT1. Binding of YWHAZ inhibits DNA-binding. Interacts with USP7; the interaction is enhanced in presence of hydrogen peroxide and occurs independently of TP53. Interacts with NLK, and this inhibits monoubiquitination and transcriptional activity. Interacts with FOXK1; the interaction inhibits MEF2C transactivation activity. In terms of processing, acetylation by CREBBP/CBP, which is induced by peroxidase stress, inhibits transcriptional activity. Deacetylation by SIRT1 is NAD-dependent and stimulates transcriptional activity. Phosphorylation by PKB/AKT1 inhibits transcriptional activity and is responsible for cytoplasmic localization. May be phosphorylated at multiple sites by NLK. Post-translationally, monoubiquitinated; monoubiquitination is induced by oxidative stress and reduced by deacetylase inhibitors; results in its relocalization to the nucleus and its increased transcriptional activity. Deubiquitinated by USP7; deubiquitination is induced by oxidative stress; enhances its interaction with USP7 and consequently, deubiquitination; increases its translocation to the cytoplasm and inhibits its transcriptional activity. Hydrogene-peroxide-induced ubiquitination and USP7-mediated deubiquitination have no major effect on its protein stability. Heart, brain, placenta, lung, liver, skeletal muscle, kidney and pancreas. Isoform zeta is most abundant in the liver, kidney, and pancreas.

It localises to the cytoplasm. It is found in the nucleus. Transcription factor involved in the regulation of the insulin signaling pathway. Binds to insulin-response elements (IREs) and can activate transcription of IGFBP1. Down-regulates expression of HIF1A and suppresses hypoxia-induced transcriptional activation of HIF1A-modulated genes. Also involved in negative regulation of the cell cycle. Involved in increased proteasome activity in embryonic stem cells (ESCs) by activating expression of PSMD11 in ESCs, leading to enhanced assembly of the 26S proteasome, followed by higher proteasome activity. This is Forkhead box protein O4 (FOXO4) from Homo sapiens (Human).